A 406-amino-acid polypeptide reads, in one-letter code: Imidazolonepropionase (406 aa).

Residues His65 and His67 each contribute to the Fe(3+) site. His65 and His67 together coordinate Zn(2+). The 4-imidazolone-5-propanoate site is built by Arg74, Tyr137, and His170. Tyr137 provides a ligand contact to N-formimidoyl-L-glutamate. His235 contacts Fe(3+). His235 is a binding site for Zn(2+). Gln238 serves as a coordination point for 4-imidazolone-5-propanoate. Asp310 contacts Fe(3+). Asp310 is a binding site for Zn(2+). Positions 312 and 314 each coordinate N-formimidoyl-L-glutamate. Thr315 contributes to the 4-imidazolone-5-propanoate binding site.

This sequence belongs to the metallo-dependent hydrolases superfamily. HutI family. Requires Zn(2+) as cofactor. Fe(3+) serves as cofactor.

It is found in the cytoplasm. The catalysed reaction is 4-imidazolone-5-propanoate + H2O = N-formimidoyl-L-glutamate. Its pathway is amino-acid degradation; L-histidine degradation into L-glutamate; N-formimidoyl-L-glutamate from L-histidine: step 3/3. Catalyzes the hydrolytic cleavage of the carbon-nitrogen bond in imidazolone-5-propanoate to yield N-formimidoyl-L-glutamate. It is the third step in the universal histidine degradation pathway. The chain is Imidazolonepropionase from Vibrio vulnificus (strain CMCP6).